The chain runs to 857 residues: ATP-dependent RNA helicase DDX24 (857 aa).

The segment at 61–179 (NPSRLFSSEE…SPKLPKKSKK (119 aa)) is disordered. A phosphoserine mark is found at serine 80 and serine 92. Residues 152–161 (PRKKKNKGKK) are compositionally biased toward basic residues. Position 170 is a phosphoserine (serine 170). The Q motif motif lies at 193–221 (SAWRDLFVPKAVLRALSFLGFSAPTPIQA). The Helicase ATP-binding domain maps to 225–528 (APAIRDKLDI…RILHKKHVKK (304 aa)). 238-245 (AETGSGKT) provides a ligand contact to ATP. Residues 279–363 (RFGATAHLGS…NEDGEEKFDA (85 aa)) form a disordered region. Serine 288 and serine 296 each carry phosphoserine. Over residues 290 to 307 (CKDRTESGVLPEEARIET) the composition is skewed to basic and acidic residues. Over residues 309–330 (AQPSDSGVQATPETSASASAQT) the composition is skewed to polar residues. A compositionally biased stretch (basic and acidic residues) spans 345 to 363 (LEEKPVPKQNEDGEEKFDA). Lysine 370 participates in a covalent cross-link: Glycyl lysine isopeptide (Lys-Gly) (interchain with G-Cter in SUMO2). The DEAD box signature appears at 471-474 (DEAD). A Helicase C-terminal domain is found at 576-723 (DLYLYYFLMQ…LFPVQSKYMD (148 aa)). Residue lysine 624 forms a Glycyl lysine isopeptide (Lys-Gly) (interchain with G-Cter in SUMO2) linkage. A disordered region spans residues 808 to 857 (RYPTQSGRPPQPVLASRNIESALSCLSRQKRRRKKPKEPRAPPQPGSSTS). A compositionally biased stretch (polar residues) spans 825 to 834 (NIESALSCLS). Positions 835-844 (RQKRRRKKPK) are enriched in basic residues. Pro residues predominate over residues 848–857 (APPQPGSSTS).

It belongs to the DEAD box helicase family. DDX24/MAK5 subfamily. Interacts with FADD. Interacts with RIPK1; this interaction disrupts RLR signaling activation of IFN-dependent transcription factor IRF7. Interacts with NIP7. Interacts with EP300; this interaction prevents TP53 acetylation mediated by EP300. In terms of processing, ubiquitinated by MDM2 without targeting DDX24 for proteasomal degradation. Instead, polyubiquitylated DDX24 promotes interaction with NIP7, a component of pre-rRNP processing complex, and associates with pre-rRNA molecules and pre-ribosomal particles.

The protein localises to the cytoplasm. It is found in the nucleus. The enzyme catalyses ATP + H2O = ADP + phosphate + H(+). Its function is as follows. ATP-dependent RNA helicase that plays a role in various aspects of RNA metabolism including pre-mRNA splicing and is thereby involved in different biological processes such as cell cycle regulation or innate immunity. Plays an inhibitory role in TP53 transcriptional activity and subsequently in TP53 controlled cell growth arrest and senescence by inhibiting its EP300 mediated acetylation. Negatively regulates cytosolic RNA-mediated innate immune signaling at least in part by affecting RIPK1/IRF7 interactions. Alternatively, possesses antiviral activity by recognizing gammaherpesvirus transcripts in the context of lytic reactivation. Plays an essential role in cell cycle regulation in vascular smooth muscle cells by interacting with and regulating FANCA (Fanconi anemia complementation group A) mRNA. The sequence is that of ATP-dependent RNA helicase DDX24 (Ddx24) from Mus musculus (Mouse).